The primary structure comprises 1127 residues: Glutamate receptor-interacting protein 1 (1127 aa).

Gln11 carries the S-palmitoyl cysteine lipid modification. At Ser43 the chain carries Phosphoserine. 6 PDZ domains span residues 53–136, 150–238, 252–336, 471–560, 572–657, and 672–754; these read VVEL…EYEL, TVEV…EYDV, LVEV…LPHH, EVVL…EFDV, HVKL…RKDE, and TVEL…KKQT. Disordered regions lie at residues 752-802, 840-865, and 942-980; these read KQTD…PSVD, KQRT…SNED, and MARS…GRKS. Composition is skewed to polar residues over residues 840–856 and 947–973; these read KQRT…SQTY and LGRQ…NTLP. The PDZ 7 domain occupies 1003–1085; it reads KVTLYKDSGM…KLDLVISRNP (83 aa). The disordered stretch occupies residues 1108–1127; sequence FFQQPSHGGNLETREPTNTL.

As to quaternary structure, interacts with EFNB3, GRIA2, GRIA3, GRIPAP1/GRASP1, PPFIA1, PPFIA4, FRAS1, PTPRF, liprins-alpha and the C-terminal tail of PRLHR. Can form homomultimers or heteromultimers with GRIP2. Interacts with EFNB1, EPHA7, EPHB2, KIF5A, KIF5B and KIF5C. Forms a ternary complex with GRIA2 and CSPG4. Interacts with ATAD1 in an ATP-dependent manner. ATAD1-catalyzed ATP hydrolysis disrupts binding to ATAD1 and to GRIA2 and leads to AMPAR complex disassembly. Interacts with SLC30A9 and PLCD4. Interacts with BUD23. Forms a complex with NSG1, GRIA2 and STX12; controls the intracellular fate of AMPAR and the endosomal sorting of the GRIA2 subunit toward recycling and membrane targeting. Interacts with NSG1. In terms of processing, palmitoylation of isoform 2. In terms of tissue distribution, expressed in brain. Isoform 2 is the major isoform in brain. Expressed in oligodendrocyte lineage cells.

The protein resides in the membrane. It is found in the cytoplasmic vesicle. Its subcellular location is the perikaryon. It localises to the cell projection. The protein localises to the dendrite. The protein resides in the cytoplasm. It is found in the endomembrane system. Its subcellular location is the postsynaptic cell membrane. It localises to the postsynaptic density. The protein localises to the endoplasmic reticulum membrane. Functionally, may play a role as a localized scaffold for the assembly of a multiprotein signaling complex and as mediator of the trafficking of its binding partners at specific subcellular location in neurons. Through complex formation with NSG1, GRIA2 and STX12 controls the intracellular fate of AMPAR and the endosomal sorting of the GRIA2 subunit toward recycling and membrane targeting. This Mus musculus (Mouse) protein is Glutamate receptor-interacting protein 1 (Grip1).